A 56-amino-acid polypeptide reads, in one-letter code: Large ribosomal subunit protein bL32 (56 aa).

The interval 1–26 is disordered; that stretch reads MAVQQNKKSRSKRGMRRSHDALSTAQ. The span at 7–16 shows a compositional bias: basic residues; that stretch reads KKSRSKRGMR.

The protein belongs to the bacterial ribosomal protein bL32 family.

In Shewanella denitrificans (strain OS217 / ATCC BAA-1090 / DSM 15013), this protein is Large ribosomal subunit protein bL32.